A 273-amino-acid polypeptide reads, in one-letter code: NH(3)-dependent NAD(+) synthetase (273 aa).

ATP is bound at residue 47-54; the sequence is GISGGQDS. Mg(2+) is bound at residue aspartate 53. Residue arginine 139 participates in deamido-NAD(+) binding. Threonine 159 contributes to the ATP binding site. Residue glutamate 164 coordinates Mg(2+). The deamido-NAD(+) site is built by lysine 172 and aspartate 179. ATP-binding residues include lysine 188 and threonine 210. 259 to 260 is a binding site for deamido-NAD(+); it reads HK.

It belongs to the NAD synthetase family. Homodimer.

The catalysed reaction is deamido-NAD(+) + NH4(+) + ATP = AMP + diphosphate + NAD(+) + H(+). Its pathway is cofactor biosynthesis; NAD(+) biosynthesis; NAD(+) from deamido-NAD(+) (ammonia route): step 1/1. Its function is as follows. Catalyzes the ATP-dependent amidation of deamido-NAD to form NAD. Uses ammonia as a nitrogen source. The chain is NH(3)-dependent NAD(+) synthetase from Staphylococcus aureus (strain COL).